Here is a 173-residue protein sequence, read N- to C-terminus: Chorion protein S19 (173 aa).

An N-terminal signal peptide occupies residues 1 to 21 (MNKFATLAVIFCACIVGSCYA).

Belongs to the chorion protein S19 family.

The protein localises to the secreted. Its function is as follows. Chorion membrane (egg shell) protein; plays a role in protecting the egg from the environment. This is Chorion protein S19 (Cp19) from Drosophila melanogaster (Fruit fly).